Here is a 358-residue protein sequence, read N- to C-terminus: Acyl-CoA desaturase 1 (358 aa).

Over 1–71 (MPAHMLQEIS…EGPPPKLEYV (71 aa)) the chain is Cytoplasmic. Residues 8–24 (EISSSYTTTTTITEPPS) show a composition bias toward low complexity. Residues 8–33 (EISSSYTTTTTITEPPSGNLQNGREK) are disordered. The helical transmembrane segment at 72-92 (WRNIILMALLHVGALYGITLI) threads the bilayer. Residue asparagine 74 coordinates substrate. The Lumenal portion of the chain corresponds to 93–96 (PSSK). A helical transmembrane segment spans residues 97-117 (VYTLLWGIFYYLISALGITAG). The Cytoplasmic segment spans residues 118–216 (AHRLWSHRTY…EKLVMFQRRY (99 aa)). Positions 119 and 124 each coordinate Fe cation. The Histidine box-1 signature appears at 119–124 (HRLWSH). Asparagine 147, arginine 154, and aspartate 155 together coordinate substrate. Fe cation contacts are provided by histidine 156, histidine 159, and histidine 160. The Histidine box-2 motif lies at 156-160 (HRAHH). Substrate-binding residues include arginine 187 and lysine 188. The helical transmembrane segment at 217 to 236 (YKPGLLLMCFILPTLVPWYC) threads the bilayer. Topologically, residues 237–240 (WGET) are lumenal. A helical transmembrane segment spans residues 241-262 (FLHSLFVSTFLRYTLVLNATWL). Tryptophan 261 provides a ligand contact to substrate. The Cytoplasmic portion of the chain corresponds to 263 to 358 (VNSAAHLYGY…RTGDGSHKSS (96 aa)). The Fe cation site is built by histidine 268, histidine 297, histidine 300, and histidine 301. The Histidine box-3 motif lies at 297 to 301 (HNYHH).

This sequence belongs to the fatty acid desaturase type 1 family. The cofactor is Fe(2+). As to expression, detected in liver (at protein level). Detected in adipose tissue. Detected in liver when rats are kept on a fat-free diet, but not when their food contains unsaturated fatty acids.

The protein resides in the endoplasmic reticulum membrane. Its subcellular location is the membrane. It carries out the reaction octadecanoyl-CoA + 2 Fe(II)-[cytochrome b5] + O2 + 2 H(+) = (9Z)-octadecenoyl-CoA + 2 Fe(III)-[cytochrome b5] + 2 H2O. Its function is as follows. Stearoyl-CoA desaturase that utilizes O(2) and electrons from reduced cytochrome b5 to introduce the first double bond into saturated fatty acyl-CoA substrates. Catalyzes the insertion of a cis double bond at the Delta-9 position into fatty acyl-CoA substrates including palmitoyl-CoA and stearoyl-CoA. Gives rise to a mixture of 16:1 and 18:1 unsaturated fatty acids. Plays an important role in lipid biosynthesis. Plays an important role in regulating the expression of genes that are involved in lipogenesis and in regulating mitochondrial fatty acid oxidation. Plays an important role in body energy homeostasis. Contributes to the biosynthesis of membrane phospholipids, cholesterol esters and triglycerides. Required for normal development of sebaceous glands. Required for the biosynthesis of normal levels of Delta-9 unsaturated fatty acids and 1-alkyl-2,3-diacylglycerol in the Harderian gland. Required for normal production of meibum, an oily material that prevents drying of the cornea. This chain is Acyl-CoA desaturase 1 (Scd1), found in Rattus norvegicus (Rat).